Consider the following 186-residue polypeptide: ATP synthase subunit b 3 (186 aa).

The helical transmembrane segment at 5-25 (LLPALLTFSATPALAAKGPFF) threads the bilayer.

Belongs to the ATPase B chain family. As to quaternary structure, F-type ATPases have 2 components, F(1) - the catalytic core - and F(0) - the membrane proton channel. F(1) has five subunits: alpha(3), beta(3), gamma(1), delta(1), epsilon(1). F(0) has three main subunits: a(1), b(2) and c(10-14). The alpha and beta chains form an alternating ring which encloses part of the gamma chain. F(1) is attached to F(0) by a central stalk formed by the gamma and epsilon chains, while a peripheral stalk is formed by the delta and b chains.

The protein localises to the cell inner membrane. In terms of biological role, f(1)F(0) ATP synthase produces ATP from ADP in the presence of a proton or sodium gradient. F-type ATPases consist of two structural domains, F(1) containing the extramembraneous catalytic core and F(0) containing the membrane proton channel, linked together by a central stalk and a peripheral stalk. During catalysis, ATP synthesis in the catalytic domain of F(1) is coupled via a rotary mechanism of the central stalk subunits to proton translocation. Component of the F(0) channel, it forms part of the peripheral stalk, linking F(1) to F(0). This Dinoroseobacter shibae (strain DSM 16493 / NCIMB 14021 / DFL 12) protein is ATP synthase subunit b 3.